The following is a 78-amino-acid chain: Translation initiation factor IF-1 (78 aa).

Residues 1-72 form the S1-like domain; sequence MAKEAEMEFE…TRGRITYRKI (72 aa).

The protein belongs to the IF-1 family. As to quaternary structure, component of the 30S ribosomal translation pre-initiation complex which assembles on the 30S ribosome in the order IF-2 and IF-3, IF-1 and N-formylmethionyl-tRNA(fMet); mRNA recruitment can occur at any time during PIC assembly.

The protein localises to the cytoplasm. Its function is as follows. One of the essential components for the initiation of protein synthesis. Stabilizes the binding of IF-2 and IF-3 on the 30S subunit to which N-formylmethionyl-tRNA(fMet) subsequently binds. Helps modulate mRNA selection, yielding the 30S pre-initiation complex (PIC). Upon addition of the 50S ribosomal subunit IF-1, IF-2 and IF-3 are released leaving the mature 70S translation initiation complex. This Mesoplasma florum (strain ATCC 33453 / NBRC 100688 / NCTC 11704 / L1) (Acholeplasma florum) protein is Translation initiation factor IF-1.